A 32-amino-acid polypeptide reads, in one-letter code: Cytochrome b6-f complex subunit 6 (32 aa).

The chain crosses the membrane as a helical span at residues 6 to 26; sequence VFYIVFIALFFGIAVGIIFAI.

The protein belongs to the PetL family. As to quaternary structure, the 4 large subunits of the cytochrome b6-f complex are cytochrome b6, subunit IV (17 kDa polypeptide, PetD), cytochrome f and the Rieske protein, while the 4 small subunits are PetG, PetL, PetM and PetN. The complex functions as a dimer.

It localises to the cellular thylakoid membrane. Functionally, component of the cytochrome b6-f complex, which mediates electron transfer between photosystem II (PSII) and photosystem I (PSI), cyclic electron flow around PSI, and state transitions. PetL is important for photoautotrophic growth as well as for electron transfer efficiency and stability of the cytochrome b6-f complex. The sequence is that of Cytochrome b6-f complex subunit 6 from Mastigocladus laminosus (Fischerella sp.).